Here is a 442-residue protein sequence, read N- to C-terminus: Trigger factor (442 aa).

Residues 176–259 (GDFISLSLYV…VNAVIEISSP (84 aa)) enclose the PPIase FKBP-type domain.

The protein belongs to the FKBP-type PPIase family. Tig subfamily.

The protein localises to the cytoplasm. The enzyme catalyses [protein]-peptidylproline (omega=180) = [protein]-peptidylproline (omega=0). In terms of biological role, involved in protein export. Acts as a chaperone by maintaining the newly synthesized protein in an open conformation. Functions as a peptidyl-prolyl cis-trans isomerase. The protein is Trigger factor of Chlamydia trachomatis serovar L2 (strain ATCC VR-902B / DSM 19102 / 434/Bu).